The sequence spans 80 residues: Exodeoxyribonuclease 7 small subunit (80 aa).

It belongs to the XseB family. Heterooligomer composed of large and small subunits.

The protein resides in the cytoplasm. It carries out the reaction Exonucleolytic cleavage in either 5'- to 3'- or 3'- to 5'-direction to yield nucleoside 5'-phosphates.. In terms of biological role, bidirectionally degrades single-stranded DNA into large acid-insoluble oligonucleotides, which are then degraded further into small acid-soluble oligonucleotides. The polypeptide is Exodeoxyribonuclease 7 small subunit (Pseudomonas aeruginosa (strain LESB58)).